The chain runs to 465 residues: 3-isopropylmalate dehydratase large subunit (465 aa).

[4Fe-4S] cluster contacts are provided by cysteine 347, cysteine 407, and cysteine 410. Residues 416-443 are disordered; the sequence is DTLRPGERSASTSNRNFEGRQGPGGRTH.

It belongs to the aconitase/IPM isomerase family. LeuC type 1 subfamily. As to quaternary structure, heterodimer of LeuC and LeuD. It depends on [4Fe-4S] cluster as a cofactor.

The catalysed reaction is (2R,3S)-3-isopropylmalate = (2S)-2-isopropylmalate. The protein operates within amino-acid biosynthesis; L-leucine biosynthesis; L-leucine from 3-methyl-2-oxobutanoate: step 2/4. Its function is as follows. Catalyzes the isomerization between 2-isopropylmalate and 3-isopropylmalate, via the formation of 2-isopropylmaleate. This is 3-isopropylmalate dehydratase large subunit from Frankia casuarinae (strain DSM 45818 / CECT 9043 / HFP020203 / CcI3).